The sequence spans 500 residues: NAD(P)H-quinone oxidoreductase chain 4, chloroplastic (500 aa).

14 consecutive transmembrane segments (helical) span residues 4–24 (FPWL…IFFL), 37–57 (IFIC…HFQL), 87–107 (IGPI…AWPV), 113–130 (LFHF…GSFS), 134–154 (LLLF…LLSM), 167–187 (FILY…GIGL), 208–228 (ALEI…SPII), 242–262 (HYST…YGLV), 272–292 (AHSI…IYAA), 305–325 (IAYS…SITD), 330–350 (GAIL…FLAG), 386–406 (LALP…GIIT), 416–436 (ILIT…SLSM), and 462–482 (LFVL…PDFV).

Belongs to the complex I subunit 4 family.

It localises to the plastid. The protein localises to the chloroplast thylakoid membrane. The enzyme catalyses a plastoquinone + NADH + (n+1) H(+)(in) = a plastoquinol + NAD(+) + n H(+)(out). It carries out the reaction a plastoquinone + NADPH + (n+1) H(+)(in) = a plastoquinol + NADP(+) + n H(+)(out). This is NAD(P)H-quinone oxidoreductase chain 4, chloroplastic from Vitis vinifera (Grape).